A 98-amino-acid polypeptide reads, in one-letter code: Keratin, high sulfur matrix protein, IIIB3 (98 aa).

N-acetylalanine is present on alanine 1.

This sequence belongs to the KRTAP type 3 family. Interacts with wool keratins. Wool.

Functionally, in the wool cortex, wool keratin intermediate filaments are embedded in an interfilamentous matrix, consisting of hair keratin-associated proteins (KRTAP), which are essential for the formation of a rigid and resistant wool shaft through their extensive disulfide bond cross-linking with abundant cysteine residues of wool keratins. The matrix proteins include the high-sulfur and high-glycine-tyrosine keratins. This Ovis aries (Sheep) protein is Keratin, high sulfur matrix protein, IIIB3.